The following is a 287-amino-acid chain: Elongation factor Ts (287 aa).

Positions 80-83 are involved in Mg(2+) ion dislocation from EF-Tu; the sequence is TDFL.

The protein belongs to the EF-Ts family.

It is found in the cytoplasm. Associates with the EF-Tu.GDP complex and induces the exchange of GDP to GTP. It remains bound to the aminoacyl-tRNA.EF-Tu.GTP complex up to the GTP hydrolysis stage on the ribosome. In Pseudomonas putida (strain W619), this protein is Elongation factor Ts.